The chain runs to 277 residues: S-formylglutathione hydrolase FrmB (277 aa).

Residues Ser-145, Asp-221, and His-254 each act as charge relay system in the active site.

This sequence belongs to the esterase D family.

It catalyses the reaction S-formylglutathione + H2O = formate + glutathione + H(+). Its function is as follows. Serine hydrolase involved in the detoxification of formaldehyde. Hydrolyzes S-formylglutathione to glutathione and formate. The sequence is that of S-formylglutathione hydrolase FrmB (frmB) from Escherichia coli O9:H4 (strain HS).